The primary structure comprises 124 residues: Acidic phospholipase A2 (124 aa).

Disulfide bonds link cysteine 26–cysteine 116, cysteine 28–cysteine 44, cysteine 43–cysteine 95, cysteine 49–cysteine 124, cysteine 50–cysteine 88, cysteine 57–cysteine 81, and cysteine 75–cysteine 86. Ca(2+)-binding residues include tyrosine 27, glycine 29, and glycine 31. Histidine 47 is a catalytic residue. Residue aspartate 48 participates in Ca(2+) binding. The active site involves aspartate 89.

The protein belongs to the phospholipase A2 family. Group II subfamily. D49 sub-subfamily. Monomer. It depends on Ca(2+) as a cofactor. Expressed by the venom gland.

The protein localises to the secreted. The catalysed reaction is a 1,2-diacyl-sn-glycero-3-phosphocholine + H2O = a 1-acyl-sn-glycero-3-phosphocholine + a fatty acid + H(+). In terms of biological role, snake venom phospholipase A2 (PLA2) that acts in vivo as an anti-thrombotic agent. Inhibits platelet aggregation induced by ADP, arachidonic acid, and thrombin. PLA2 catalyzes the calcium-dependent hydrolysis of the 2-acyl groups in 3-sn-phosphoglycerides. The sequence is that of Acidic phospholipase A2 from Gloydius halys (Chinese water mocassin).